The sequence spans 189 residues: Flavin prenyltransferase UbiX (189 aa).

FMN contacts are provided by residues 10-12 (GAS), S37, 88-91 (SIKT), and R123. Dimethylallyl phosphate-binding residues include Y153 and R169.

Belongs to the UbiX/PAD1 family.

It carries out the reaction dimethylallyl phosphate + FMNH2 = prenylated FMNH2 + phosphate. Its pathway is cofactor biosynthesis; ubiquinone biosynthesis. In terms of biological role, flavin prenyltransferase that catalyzes the synthesis of the prenylated FMN cofactor (prenyl-FMN) for 4-hydroxy-3-polyprenylbenzoic acid decarboxylase UbiD. The prenyltransferase is metal-independent and links a dimethylallyl moiety from dimethylallyl monophosphate (DMAP) to the flavin N5 and C6 atoms of FMN. The chain is Flavin prenyltransferase UbiX from Escherichia coli O157:H7.